A 310-amino-acid chain; its full sequence is 26S proteasome non-ATPase regulatory subunit 7 homolog B (310 aa).

N-acetylmethionine is present on Met1. The region spanning 17–154 (VIVHPLVLLS…YYAVEEVKEN (138 aa)) is the MPN domain.

This sequence belongs to the peptidase M67A family. As to quaternary structure, component of the 19S regulatory particle (RP/PA700) lid subcomplex of the 26S proteasome. The 26S proteasome is composed of a core protease (CP), known as the 20S proteasome, capped at one or both ends by the 19S regulatory particle (RP/PA700). The RP/PA700 complex is composed of at least 17 different subunits in two subcomplexes, the base and the lid, which form the portions proximal and distal to the 20S proteolytic core, respectively.

Functionally, acts as a regulatory subunit of the 26S proteasome which is involved in the ATP-dependent degradation of ubiquitinated proteins. This is 26S proteasome non-ATPase regulatory subunit 7 homolog B (RPN8B) from Arabidopsis thaliana (Mouse-ear cress).